Consider the following 3011-residue polypeptide: Genome polyprotein (3011 aa).

S2 bears the N-acetylserine; by host mark. The tract at residues 2 to 23 (STIPKPQRKTKRNTNRRPQDVK) is interaction with STAT1. Residues 2–58 (STIPKPQRKTKRNTNRRPQDVKFPGGGQIVGGVYLLPRRGPRLGVRATRKTSERSQP) are interaction with EIF2AK2/PKR. An interaction with DDX3X region spans residues 2–59 (STIPKPQRKTKRNTNRRPQDVKFPGGGQIVGGVYLLPRRGPRLGVRATRKTSERSQPR). Residues 2–75 (STIPKPQRKT…PKVRRPEGRT (74 aa)) are disordered. The Cytoplasmic segment spans residues 2-168 (STIPKPQRKT…EDGVNYATGN (167 aa)). Short sequence motifs (nuclear localization signal) lie at residues 5–13 (PKPQRKTKR) and 38–43 (PRRGPR). Residues 7–16 (PQRKTKRNTN) show a composition bias toward basic residues. The segment covering 32–47 (GGVYLLPRRGPRLGVR) has biased composition (low complexity). Position 53 is a phosphoserine; by host (S53). 2 consecutive short sequence motifs (nuclear localization signal) follow at residues 58 to 64 (PRGRRQP) and 66 to 71 (PKVRRP). Over residues 58–68 (PRGRRQPIPKV) the composition is skewed to basic residues. Phosphoserine; by host is present on S99. The important for endoplasmic reticulum and mitochondrial localization stretch occupies residues 112 to 152 (PRRRSRNLGKVIDTLTCGFADLMGYIPLVGAPLGGAARALA). Phosphoserine; by host PKA is present on S116. The tract at residues 122-173 (VIDTLTCGFADLMGYIPLVGAPLGGAARALAHGVRVLEDGVNYATGNLPGCS) is interaction with APOA2. Positions 164 to 167 (YATG) are important for lipid droplets localization. A helical membrane pass occupies residues 169 to 189 (LPGCSFSIFLLALLSCLTVPA). Positions 178-191 (LLALLSCLTVPASA) are cleaved as a propeptide — ER anchor for the core protein, removed in mature form by host signal peptidase. The Lumenal segment spans residues 190 to 358 (SAYQVRNSTG…AGAHWGVLAG (169 aa)). 3 N-linked (GlcNAc...) asparagine; by host glycosylation sites follow: N196, N209, and N234. Residues 265-296 (LVGSATLCSALYVGDLCGSVFLIGQLFTFSPR) form an important for fusion region. N305 is a glycosylation site (N-linked (GlcNAc...) asparagine; by host). A helical membrane pass occupies residues 359–379 (IAYFSMVGNWAKVLVVLLLFA). Residues 380 to 725 (GVDAETIVSG…WEYVVLLFLL (346 aa)) lie on the Lumenal side of the membrane. The segment at 385–411 (TIVSGGQAARAMSGLVSLFTPGAKQNI) is HVR1. N-linked (GlcNAc...) (high mannose) asparagine; by host glycans are attached at residues N417, N423, N430, and N448. 4 disulfides stabilise this stretch: C429–C552, C452–C459, C486–C494, and C503–C508. Residues 474-479 (HANGSG) form an HVR2 region. A CD81-binding 1 region spans residues 480 to 493 (PDQRPYCWHYPPKP). A glycan (N-linked (GlcNAc...) (high mannose) asparagine; by host) is linked at N532. A glycan (N-linked (GlcNAc...) asparagine; by host) is linked at N540. The segment at 544–551 (PPLGNWFG) is CD81-binding 2. N556 carries N-linked (GlcNAc...) (high mannose) asparagine; by host glycosylation. C564 and C569 are joined by a disulfide. N-linked (GlcNAc...) (high mannose) asparagine; by host glycosylation occurs at N576. Intrachain disulfides connect C581–C585, C597–C620, and C607–C644. 2 N-linked (GlcNAc...) (high mannose) asparagine; by host glycosylation sites follow: N623 and N645. Residues C652 and C677 are joined by a disulfide bond. The tract at residues 660–671 (SELSPLLLSTTQ) is PKR/eIF2-alpha phosphorylation homology domain (PePHD). The helical transmembrane segment at 726-746 (LADARVCSCLWMMLLISQAEA) threads the bilayer. The Lumenal segment spans residues 747 to 757 (ALENLVILNAA). A helical membrane pass occupies residues 758-778 (SLAGTRGLVSFLVFFCFAWYL). The Cytoplasmic portion of the chain corresponds to 779-781 (KGR). Residues 782-803 (WVPGAAYALYGMWPLLLLLLAL) form a helical membrane-spanning segment. At 804–813 (PQRAYALDTE) the chain is on the lumenal side. Residues 814-834 (VAASCGGVVLVGLMALTLSPY) form a helical membrane-spanning segment. Over 835–838 (YKRC) the chain is Cytoplasmic. Residues 839–859 (ISWCLWWLQYFLTRVEAQLHV) traverse the membrane as a helical segment. Over 860–881 (WVPPLNVRGGRDAVILLMCVVH) the chain is Lumenal. A helical membrane pass occupies residues 882–902 (PTLVFDITKLLLAVLGPLWIL). The Peptidase C18 domain maps to 903–1026 (QASLLKVPYF…GMVSKGWRLL (124 aa)). The Cytoplasmic portion of the chain corresponds to 903–1657 (QASLLKVPYF…CMSADLEVVT (755 aa)). The segment at 904–1206 (ASLLKVPYFV…PVESLETTMR (303 aa)) is protease NS2-3. The S-palmitoyl cysteine; by host moiety is linked to residue C922. Residues 929–949 (VGGHYVQMAIIKLGALTGTYV) form an interaction with host SCPS1 region. Residues H952, E972, and C993 each act as for protease NS2 activity; shared with dimeric partner in the active site. The region spanning 1027–1208 (APITAYAQQT…ESLETTMRSP (182 aa)) is the Peptidase S29 domain. Active-site charge relay system; for serine protease NS3 activity residues include H1083 and D1107. The Zn(2+) site is built by C1123 and C1125. Catalysis depends on S1165, which acts as the Charge relay system; for serine protease NS3 activity. Zn(2+) contacts are provided by C1171 and H1175. The 153-residue stretch at 1217-1369 (PAVPQSFQVA…ANIEEVALST (153 aa)) folds into the Helicase ATP-binding domain. 1230–1237 (APTGSGKS) lines the ATP pocket. Mg(2+) is bound by residues S1237 and E1317. A DECH box motif is present at residues 1316 to 1319 (DECH). The segment at 1486 to 1497 (QRRGRTGRGKPG) is RNA-binding. The helical transmembrane segment at 1658–1678 (STWVLVGGVLAALAAYCLSTG) threads the bilayer. The segment at 1679–1690 (CVVIVGRIVLSG) is NS3-binding. Topologically, residues 1679-1805 (CVVIVGRIVL…AVTSPLTTSQ (127 aa)) are cytoplasmic. A helical membrane pass occupies residues 1806–1824 (TLLFNILGGWVAAQLAAPG). Residues 1825–1828 (AATA) lie on the Lumenal side of the membrane. A helical membrane pass occupies residues 1829-1849 (FVGSGLAGAAVGSVGLGRVLV). A topological domain (cytoplasmic) is located at residue D1850. A helical transmembrane segment spans residues 1851–1871 (ILAGYGAGVAGALVAFKIMSG). The Lumenal portion of the chain corresponds to 1872 to 1881 (ELPSTEDLVN). The helical transmembrane segment at 1882–1902 (LLPAILSPGALVVGVVCAAIL) threads the bilayer. Over 1903–1972 (RRHVGPGEGA…WLSSESTTPC (70 aa)) the chain is Cytoplasmic. A lipid anchor (S-palmitoyl cysteine; by host) is attached at C1972. An intramembrane segment occupies 1973–2002 (SGSWLRDIWDWICEVLSDFKTWLKTKLMPH). Residues 2003-2990 (LPGIPFVSCQ…YHSVSHARPR (988 aa)) lie on the Cytoplasmic side of the membrane. Positions 2011, 2029, 2031, and 2052 each coordinate Zn(2+). The tract at residues 2120–2208 (EFFTELDGVR…ASSSASQLSA (89 aa)) is FKBP8-binding. The tract at residues 2120–2332 (EFFTELDGVR…PVPPPRKKRT (213 aa)) is transcriptional activation. Residues 2135–2139 (PPCKP) are interaction with non-structural protein 4A. Residues 2187–2207 (GRRLARGSPPSEASSSASQLS) are disordered. The interaction with host SKP2 stretch occupies residues 2189–2441 (RLARGSPPSE…TPCAAEEQKL (253 aa)). S2194 is subject to Phosphoserine; by host; in p56. Phosphoserine; by host; in p58 occurs at positions 2197, 2201, 2204, 2207, and 2210. The tract at residues 2210-2249 (SLKATCTINHDSPDAELIEANLLWRQEMGGNITRVESENK) is ISDR. Positions 2210–2275 (SLKATCTINH…REISVPAEIL (66 aa)) are interaction with EIF2AK2/PKR. Positions 2249–2306 (KVVILDSFDPLVAEEDEREISVPAEILRKSRRFTQALPIWARPDYNPPLIETWKKPNY) are NS4B-binding. A disordered region spans residues 2312–2334 (HGCPLPPPQSPPVPPPRKKRTVV). Positions 2315–2326 (PLPPPQSPPVPP) are enriched in pro residues. The SH3-binding signature appears at 2322-2325 (PPVP). Residues 2326-2334 (PPRKKRTVV) carry the Nuclear localization signal motif. K2350 participates in a covalent cross-link: Glycyl lysine isopeptide (Lys-Gly) (interchain with G-Cter in ubiquitin). The span at 2351–2369 (SFGSSSTSGITGDNTTTSS) shows a compositional bias: low complexity. Residues 2351-2408 (SFGSSSTSGITGDNTTTSSEPAPSGCSPDSDAESYSSMPPLEGEPGDPDLSDGSWSTV) form a disordered region. Residues 2354 to 2377 (SSSTSGITGDNTTTSSEPAPSGCS) are V3. Phosphoserine; by host occurs at positions 2449 and 2462. Residues 2634 to 2752 (PMGFSYDTRC…ICESAGVQED (119 aa)) enclose the RdRp catalytic domain. Positions 2640, 2738, and 2739 each coordinate Mg(2+). A helical transmembrane segment spans residues 2991–3011 (WFWFCLLLLAAGVGIYLLPNR).

The protein belongs to the hepacivirus polyprotein family. As to quaternary structure, homooligomer. Interacts with E1 (via C-terminus). Interacts with the non-structural protein 5A. Interacts (via N-terminus) with host STAT1 (via SH2 domain); this interaction results in decreased STAT1 phosphorylation and ubiquitin-mediated proteasome-dependent STAT1 degradation, leading to decreased IFN-stimulated gene transcription. Interacts with host STAT3; this interaction constitutively activates STAT3. Interacts with host LTBR receptor. Interacts with host TNFRSF1A receptor and possibly induces apoptosis. Interacts with host HNRPK. Interacts with host YWHAE. Interacts with host UBE3A/E6AP. Interacts with host DDX3X. Interacts with host APOA2. Interacts with host RXRA protein. Interacts with host SP110 isoform 3/Sp110b; this interaction sequesters the transcriptional corepressor SP110 away from the nucleus. Interacts with host CREB3 nuclear transcription protein; this interaction triggers cell transformation. Interacts with host ACY3. Interacts with host C1QR1. Interacts with host RBM24; this interaction, which enhances the interaction of the mature core protein with 5'-UTR, may inhibit viral translation and favor replication. Interacts with host EIF2AK2/PKR; this interaction induces the autophosphorylation of EIF2AK2. Part of the viral assembly initiation complex composed of NS2, E1, E2, NS3, NS4A, NS5A and the mature core protein. Forms a heterodimer with envelope glycoprotein E2. Interacts with mature core protein. Interacts with protease NS2. The heterodimer E1/E2 interacts with host CLDN1; this interaction plays a role in viral entry into host cell. Interacts with host SPSB2 (via C-terminus). Part of the viral assembly initiation complex composed of NS2, E1, E2, NS3, NS4A, NS5A and the mature core protein. Interacts with host NEURL3; this interaction prevents E1 binding to glycoprotein E2. In terms of assembly, forms a heterodimer with envelope glycoprotein E1. Interacts with host CD81 and SCARB1 receptors; these interactions play a role in viral entry into host cell. Interacts with host EIF2AK2/PKR; this interaction inhibits EIF2AK2 and probably allows the virus to evade the innate immune response. Interacts with host CD209/DC-SIGN and CLEC4M/DC-SIGNR. Interact with host SPCS1; this interaction is essential for viral particle assembly. Interacts with protease NS2. The heterodimer E1/E2 interacts with host CLDN1; this interaction plays a role in viral entry into host cell. Part of the viral assembly initiation complex composed of NS2, E1, E2, NS3, NS4A, NS5A and the mature core protein. Interacts with host SLC3A2/4F2hc; the interaction may facilitate viral entry into host cell. Interacts with human PLSCR1. As to quaternary structure, homohexamer. Homoheptamer. Interacts with protease NS2. Homodimer. Interacts with host SPCS1; this interaction is essential for viral particle assembly. Interacts with envelope glycoprotein E1. Interacts with envelope glycoprotein E2. Interacts with viroporin p7. Interacts with serine protease/helicase NS3. Part of the replication complex composed of NS2, NS3, NS4A, NS4B, NS5A and the RNA-directed RNA polymerase embedded in an ER-derived membranous web. Part of the viral assembly initiation complex composed of NS2, E1, E2, NS3, NS4A, NS5A and the mature core protein. In terms of assembly, interacts with protease NS2. Interacts with non-structural protein 4A; this interaction stabilizes the folding of NS3 serine protease. NS3-NS4A interaction is essential for NS3 activation and allows membrane anchorage of the latter. NS3/NS4A complex also prevents phosphorylation of host IRF3, thus preventing the establishment of dsRNA induced antiviral state. Interacts with host MAVS; this interaction leads to the cleavage and inhibition of host MAVS. Interacts with host TICAM1; this interaction leads to the cleavage and inhibition of host TICAM1. Interacts with host TANK-binding kinase/TBK1; this interaction results in the inhibition of the association between TBK1 and IRF3, which leads to the inhibition of IRF3 activation. Interacts with host RBM24. Part of the replication complex composed of NS2, NS3, NS4A, NS4B, NS5A and the RNA-directed RNA polymerase embedded in an ER-derived membranous web. Part of the viral assembly initiation complex composed of NS2, E1, E2, NS3, NS4A, NS5A and the mature core protein. As to quaternary structure, interacts with NS3 serine protease; this interaction stabilizes the folding of NS3 serine protease. NS3-NS4A interaction is essential for NS3 activation and allows membrane anchorage of the latter. Interacts with non-structural protein 5A (via N-terminus). Part of the replication complex composed of NS2, NS3, NS4A, NS4B, NS5A and the RNA-directed RNA polymerase embedded in an ER-derived membranous web. Part of the viral assembly initiation complex composed of NS2, E1, E2, NS3, NS4A, NS5A and the mature core protein. Homomultimer. Interacts with non-structural protein NS5A. Interacts with host PLA2G4C; this interaction likely initiates the recruitment of replication complexes to lipid droplets. Interacts with host STING; this interaction disrupts the interaction between STING and TBK1 thereby suppressing the interferon signaling. Part of the replication complex composed of NS2, NS3, NS4A, NS4B, NS5A and the RNA-directed RNA polymerase embedded in an ER-derived membranous web. In terms of assembly, monomer. Homodimer; dimerization is required for RNA-binding. Interacts with the mature core protein. Interacts (via N-terminus) with non-structural protein 4A. Interacts with non-structural protein 4B. Interacts (via region D2) with RNA-directed RNA polymerase. Part of the viral assembly initiation complex composed of NS2, E1, E2, NS3, NS4A, NS5A and the mature core protein. Part of the replication complex composed of NS2, NS3, NS4A, NS4B, NS5A and the RNA-directed RNA polymerase embedded in an ER-derived membranous web. Interacts with host GRB2. Interacts with host BIN1. Interacts with host PIK3R1. Interacts with host SRCAP. Interacts with host FKBP8. Interacts (via C-terminus) with host VAPB (via MSP domain). Interacts with host EIF2AK2/PKR; this interaction leads to disruption of EIF2AK2 dimerization by NS5A and probably allows the virus to evade the innate immune response. Interacts (via N-terminus) with host PACSIN2 (via N-terminus); this interaction attenuates protein kinase C alpha-mediated phosphorylation of PACSIN2 by disrupting the interaction between PACSIN2 and PRKCA. Interacts (via N-terminus) with host SRC kinase (via SH2 domain). Interacts with most Src-family kinases. Interacts with host IFI27 and SKP2; promotes the ubiquitin-mediated proteasomal degradation of NS5A. Interacts with host GPS2. Interacts with host TNFRSF21; this interaction allows the modulation by the virus of JNK, p38 MAPK, STAT3, and Akt signaling pathways in a DR6-dependent manner. Interacts (via N-terminus) with host CIDEB (via N-terminus); this interaction seems to regulate the association of HCV particles with APOE. Interacts with host CHKA/Choline Kinase-alpha; CHKA bridges host PI4KA and NS5A and potentiates NS5A-stimulated PI4KA activity, which then facilitates the targeting of the ternary complex to the ER for viral replication. Interacts with host SPSB2 (via C-terminus); this interaction targets NS5A for ubiquitination and degradation. Interacts with host RAB18; this interaction may promote the association of NS5A and other replicase components with lipid droplets. Interacts (via region D2) with host PPIA/CYPA; the interaction stimulates RNA-binding ability of NS5A and is dependent on the peptidyl-prolyl cis-trans isomerase activity of PPIA/CYPA. Interacts with host TRIM14; this interaction induces the degradation of NS5A. As to quaternary structure, homooligomer. Interacts with non-structural protein 5A. Interacts with host VAPB. Interacts with host PRK2/PKN2. Interacts with host HNRNPA1 and SEPT6; these interactions facilitate viral replication. Part of the replication complex composed of NS2, NS3, NS4A, NS4B, NS5A and the RNA-directed RNA polymerase. The cofactor is Zn(2+). Requires Mg(2+) as cofactor. Post-translationally, specific enzymatic cleavages in vivo yield mature proteins. The structural proteins, core, E1, E2 and p7 are produced by proteolytic processing by host signal peptidases. The core protein precursor is synthesized as a 23 kDa, which is retained in the ER membrane through the hydrophobic signal peptide. Cleavage by the signal peptidase releases the 21 kDa mature core protein. The cleavage of the core protein precursor occurs between aminoacids 176 and 188 but the exact cleavage site is not known. Some degraded forms of the core protein appear as well during the course of infection. The other proteins (p7, NS2, NS3, NS4A, NS4B, NS5A and NS5B) are cleaved by the viral proteases. Autoprocessing between NS2 and NS3 is mediated by the NS2 cysteine protease catalytic domain and regulated by the NS3 N-terminal domain. Phosphorylated by host PKC and PKA. In terms of processing, ubiquitinated; mediated by UBE3A and leading to core protein subsequent proteasomal degradation. Post-translationally, highly N-glycosylated. Palmitoylation is required for NS2/3 autoprocessing and E2 recruitment to membranes. In terms of processing, palmitoylated. This modification may play a role in its polymerization or in protein-protein interactions. Post-translationally, phosphorylated on serines in a basal form termed p56. p58 is a hyperphosphorylated form of p56. p56 and p58 coexist in the cell in roughly equivalent amounts. Hyperphosphorylation is dependent on the presence of NS4A. Host CSNK1A1/CKI-alpha or RPS6KB1 kinases may be responsible for NS5A phosphorylation. Tyrosine phosphorylation is essential for the interaction with host SRC. In terms of processing, the N-terminus is phosphorylated by host PRK2/PKN2.

The protein resides in the host endoplasmic reticulum membrane. It is found in the host mitochondrion membrane. It localises to the virion. Its subcellular location is the host cytoplasm. The protein localises to the host nucleus. The protein resides in the host lipid droplet. It is found in the virion membrane. It localises to the host mitochondrion. Its subcellular location is the host cell membrane. The protein localises to the host perinuclear region. It carries out the reaction Hydrolysis of four peptide bonds in the viral precursor polyprotein, commonly with Asp or Glu in the P6 position, Cys or Thr in P1 and Ser or Ala in P1'.. The enzyme catalyses a ribonucleoside 5'-triphosphate + H2O = a ribonucleoside 5'-diphosphate + phosphate + H(+). It catalyses the reaction ATP + H2O = ADP + phosphate + H(+). The catalysed reaction is RNA(n) + a ribonucleoside 5'-triphosphate = RNA(n+1) + diphosphate. Its activity is regulated as follows. Inhibited by the antiviral drug hexamethylene amiloride. Inhibition by amantadine appears to be genotype-dependent. Also inhibited by long-alkyl-chain iminosugar derivatives. With respect to regulation, activity is up-regulated by PRK2/PKN2-mediated phosphorylation. In terms of biological role, packages viral RNA to form a viral nucleocapsid, and promotes virion budding. Participates in the viral particle production as a result of its interaction with the non-structural protein 5A. Binds RNA and may function as a RNA chaperone to induce the RNA structural rearrangements taking place during virus replication. Modulates viral translation initiation by interacting with viral IRES and 40S ribosomal subunit. Affects various cell signaling pathways, host immunity and lipid metabolism. Prevents the establishment of cellular antiviral state by blocking the interferon-alpha/beta (IFN-alpha/beta) and IFN-gamma signaling pathways and by blocking the formation of phosphorylated STAT1 and promoting ubiquitin-mediated proteasome-dependent degradation of STAT1. Activates STAT3 leading to cellular transformation. Regulates the activity of cellular genes, including c-myc and c-fos. May repress the promoter of p53, and sequester CREB3 and SP110 isoform 3/Sp110b in the cytoplasm. Represses cell cycle negative regulating factor CDKN1A, thereby interrupting an important check point of normal cell cycle regulation. Targets transcription factors involved in the regulation of inflammatory responses and in the immune response: suppresses TNF-induced NF-kappa-B activation, and activates AP-1. Binds to dendritic cells (DCs) via C1QR1, resulting in down-regulation of T-lymphocytes proliferation. Alters lipid metabolism by interacting with hepatocellular proteins involved in lipid accumulation and storage. Induces up-regulation of FAS promoter activity, and thereby contributes to the increased triglyceride accumulation in hepatocytes (steatosis). Functionally, forms a heterodimer with envelope glycoprotein E2, which mediates virus attachment to the host cell, virion internalization through clathrin-dependent endocytosis and fusion with host membrane. Fusion with the host cell is most likely mediated by both E1 and E2, through conformational rearrangements of the heterodimer required for fusion rather than a classical class II fusion mechanism. E1/E2 heterodimer binds host apolipoproteins such as APOB and ApoE thereby forming a lipo-viro-particle (LVP). APOE associated to the LVP allows the initial virus attachment to cell surface receptors such as the heparan sulfate proteoglycans (HSPGs), syndecan-1 (SDC1), syndecan-1 (SDC2), the low-density lipoprotein receptor (LDLR) and scavenger receptor class B type I (SCARB1). The cholesterol transfer activity of SCARB1 allows E2 exposure and binding of E2 to SCARB1 and the tetraspanin CD81. E1/E2 heterodimer binding on CD81 activates the epithelial growth factor receptor (EGFR) signaling pathway. Diffusion of the complex E1-E2-EGFR-SCARB1-CD81 to the cell lateral membrane allows further interaction with Claudin 1 (CLDN1) and occludin (OCLN) to finally trigger HCV entry. Its function is as follows. Forms a heterodimer with envelope glycoprotein E1, which mediates virus attachment to the host cell, virion internalization through clathrin-dependent endocytosis and fusion with host membrane. Fusion with the host cell is most likely mediated by both E1 and E2, through conformational rearrangements of the heterodimer required for fusion rather than a classical class II fusion mechanism. The interaction between envelope glycoprotein E2 and host apolipoprotein E/APOE allows the proper assembly, maturation and infectivity of the viral particles. This interaction is probably promoted via the up-regulation of cellular autophagy by the virus. E1/E2 heterodimer binds host apolipoproteins such as APOB and APOE thereby forming a lipo-viro-particle (LVP). APOE associated to the LVP allows the initial virus attachment to cell surface receptors such as the heparan sulfate proteoglycans (HSPGs), syndecan-1 (SDC1), syndecan-1 (SDC2), the low-density lipoprotein receptor (LDLR) and scavenger receptor class B type I (SCARB1). The cholesterol transfer activity of SCARB1 allows E2 exposure and binding of E2 to SCARB1 and the tetraspanin CD81. E1/E2 heterodimer binding on CD81 activates the epithelial growth factor receptor (EGFR) signaling pathway. Diffusion of the complex E1-E2-EGFR-SCARB1-CD81 to the cell lateral membrane allows further interaction with Claudin 1 (CLDN1) and occludin (OCLN) to finally trigger HCV entry. Inhibits host EIF2AK2/PKR activation, preventing the establishment of an antiviral state. Viral ligand for CD209/DC-SIGN and CLEC4M/DC-SIGNR, which are respectively found on dendritic cells (DCs), and on liver sinusoidal endothelial cells and macrophage-like cells of lymph node sinuses. These interactions allow the capture of circulating HCV particles by these cells and subsequent facilitated transmission to permissive cells such as hepatocytes and lymphocyte subpopulations. The interaction between E2 and host amino acid transporter complex formed by SLC3A2 and SLC7A5/LAT1 may facilitate viral entry into host cell. Ion channel protein that acts as a viroporin and plays an essential role in the assembly, envelopment and secretion of viral particles. Regulates the host cell secretory pathway, which induces the intracellular retention of viral glycoproteins and favors assembly of viral particles. Creates a pore in acidic organelles and releases Ca(2+) and H(+) in the cytoplasm of infected cells, leading to a productive viral infection. High levels of cytoplasmic Ca(2+) may trigger membrane trafficking and transport of viral ER-associated proteins to viroplasms, sites of viral genome replication. This ionic imbalance induces the assembly of the inflammasome complex, which triggers the maturation of pro-IL-1beta into IL-1beta through the action of caspase-1. Targets also host mitochondria and induces mitochondrial depolarization. In addition of its role as a viroporin, acts as a lipid raft adhesion factor. In terms of biological role, cysteine protease required for the proteolytic auto-cleavage between the non-structural proteins NS2 and NS3. The N-terminus of NS3 is required for the function of NS2 protease (active region NS2-3). Promotes the initiation of viral particle assembly by mediating the interaction between structural and non-structural proteins. Functionally, displays three enzymatic activities: serine protease with a chymotrypsin-like fold, NTPase and RNA helicase. NS3 serine protease, in association with NS4A, is responsible for the cleavages of NS3-NS4A, NS4A-NS4B, NS4B-NS5A and NS5A-NS5B. The NS3/NS4A complex prevents phosphorylation of host IRF3, thus preventing the establishment of dsRNA induced antiviral state. The NS3/NS4A complex induces host amino acid transporter component SLC3A2, thus contributing to HCV propagation. NS3 RNA helicase binds to RNA and unwinds both dsDNA and dsRNA in the 3' to 5' direction, and likely resolves RNA complicated stable secondary structures in the template strand. Binds a single ATP and catalyzes the unzipping of a single base pair of dsRNA. Inhibits host antiviral proteins TBK1 and IRF3 thereby preventing the establishment of an antiviral state. Cleaves host MAVS/CARDIF thereby preventing the establishment of an antiviral state. Cleaves host TICAM1/TRIF, thereby disrupting TLR3 signaling and preventing the establishment of an antiviral state. Its function is as follows. Induces a specific membrane alteration that serves as a scaffold for the virus replication complex. This membrane alteration gives rise to the so-called ER-derived membranous web that contains the replication complex. NS4B self-interaction contributes to its function in membranous web formation. Promotes host TRIF protein degradation in a CASP8-dependent manner thereby inhibiting host TLR3-mediated interferon signaling. Disrupts the interaction between STING and TBK1 contributing to the inhibition of interferon signaling. Phosphorylated protein that is indispensable for viral replication and assembly. Both hypo- and hyperphosphorylated states are required for the viral life cycle. The hyperphosphorylated form of NS5A is an inhibitor of viral replication. Involved in RNA-binding and especially in binding to the viral genome. Zinc is essential for RNA-binding. Participates in the viral particle production as a result of its interaction with the mature viral core protein. Its interaction with host VAPB may target the viral replication complex to vesicles. Down-regulates viral IRES translation initiation. Mediates interferon resistance, presumably by interacting with and inhibiting host EIF2AK2/PKR. Prevents BIN1-induced apoptosis. Acts as a transcriptional activator of some host genes important for viral replication when localized in the nucleus. Via the interaction with host PACSIN2, modulates lipid droplet formation in order to promote virion assembly. Modulates TNFRSF21/DR6 signaling pathway for viral propagation. In terms of biological role, RNA-dependent RNA polymerase that performs primer-template recognition and RNA synthesis during viral replication. Initiates RNA transcription/replication at a flavin adenine dinucleotide (FAD), resulting in a 5'- FAD cap on viral RNAs. In this way, recognition of viral 5' RNA by host pattern recognition receptors can be bypassed, thereby evading activation of antiviral pathways. This is Genome polyprotein from Hepatitis C virus genotype 1b (isolate HC-J1) (HCV).